Reading from the N-terminus, the 307-residue chain is Probable RuBisCO transcriptional regulator (307 aa).

The 58-residue stretch at 4–61 (FTLQQLRILKAVATEKNFTKAAELLYLSQPSLSKQIKTLEKNLDILLVNRENNKISLT) folds into the HTH lysR-type domain. A DNA-binding region (H-T-H motif) is located at residues 21 to 40 (FTKAAELLYLSQPSLSKQIK).

This sequence belongs to the LysR transcriptional regulatory family.

It is found in the plastid. The protein localises to the chloroplast. Functionally, trans-acting transcriptional regulator of RuBisCO genes (rbcL and rbcS) expression. The chain is Probable RuBisCO transcriptional regulator (rbcR) from Phaeodactylum tricornutum (strain CCAP 1055/1).